The chain runs to 267 residues: L-aspartate dehydrogenase (267 aa).

Residues alanine 124 and asparagine 190 each coordinate NAD(+). Residue histidine 220 is part of the active site.

The protein belongs to the L-aspartate dehydrogenase family.

The enzyme catalyses L-aspartate + NADP(+) + H2O = oxaloacetate + NH4(+) + NADPH + H(+). The catalysed reaction is L-aspartate + NAD(+) + H2O = oxaloacetate + NH4(+) + NADH + H(+). Its pathway is cofactor biosynthesis; NAD(+) biosynthesis; iminoaspartate from L-aspartate (dehydrogenase route): step 1/1. Specifically catalyzes the NAD or NADP-dependent dehydrogenation of L-aspartate to iminoaspartate. The polypeptide is L-aspartate dehydrogenase (Ralstonia pickettii (strain 12J)).